The following is a 327-amino-acid chain: Lipoyl synthase (327 aa).

The [4Fe-4S] cluster site is built by cysteine 72, cysteine 77, cysteine 83, cysteine 98, cysteine 102, cysteine 105, and serine 313. Positions 83 to 302 constitute a Radical SAM core domain; it reads CWSHGTATIM…RKVGLEKGFL (220 aa).

This sequence belongs to the radical SAM superfamily. Lipoyl synthase family. Requires [4Fe-4S] cluster as cofactor.

It localises to the cytoplasm. The catalysed reaction is [[Fe-S] cluster scaffold protein carrying a second [4Fe-4S](2+) cluster] + N(6)-octanoyl-L-lysyl-[protein] + 2 oxidized [2Fe-2S]-[ferredoxin] + 2 S-adenosyl-L-methionine + 4 H(+) = [[Fe-S] cluster scaffold protein] + N(6)-[(R)-dihydrolipoyl]-L-lysyl-[protein] + 4 Fe(3+) + 2 hydrogen sulfide + 2 5'-deoxyadenosine + 2 L-methionine + 2 reduced [2Fe-2S]-[ferredoxin]. The protein operates within protein modification; protein lipoylation via endogenous pathway; protein N(6)-(lipoyl)lysine from octanoyl-[acyl-carrier-protein]: step 2/2. In terms of biological role, catalyzes the radical-mediated insertion of two sulfur atoms into the C-6 and C-8 positions of the octanoyl moiety bound to the lipoyl domains of lipoate-dependent enzymes, thereby converting the octanoylated domains into lipoylated derivatives. This is Lipoyl synthase from Francisella tularensis subsp. mediasiatica (strain FSC147).